A 238-amino-acid polypeptide reads, in one-letter code: uncharacterized protein (238 aa).

This sequence belongs to the chlamydial CPn_0658/CT_538/TC_0825 family.

This is an uncharacterized protein from Chlamydia trachomatis serovar D (strain ATCC VR-885 / DSM 19411 / UW-3/Cx).